The sequence spans 964 residues: Translation initiation factor IF-2 (964 aa).

Positions 35-353 (ASSTIEPPVV…RQKRNEYESM (319 aa)) are disordered. Over residues 64–108 (KPTPAKPAAKPGAPAPKPGTAQKPTAPTPGAVAAPKPGTAAAKPT) the composition is skewed to low complexity. The span at 124-133 (PAKPTAPKPA) shows a compositional bias: pro residues. Residues 145 to 155 (AAKKAAEDKAT) are compositionally biased toward basic and acidic residues. The segment covering 166-178 (NAMPRPMAKPGPK) has biased composition (pro residues). Over residues 220 to 233 (PRPQGGQRSGAPRD) the composition is skewed to low complexity. 2 stretches are compositionally biased toward gly residues: residues 234–252 (GQGG…GPRP) and 290–333 (GKGG…GRPG). Positions 337–346 (RRGRKSKRQK) are enriched in basic residues. In terms of domain architecture, tr-type G spans 459–631 (KRPPVVTVMG…VCLTADAELD (173 aa)). The interval 468-475 (GHVDHGKT) is G1. 468 to 475 (GHVDHGKT) is a binding site for GTP. The interval 493–497 (GITQG) is G2. The interval 518–521 (DTPG) is G3. GTP contacts are provided by residues 518–522 (DTPGH) and 572–575 (NKID). The segment at 572–575 (NKID) is G4. Residues 608–610 (SAK) form a G5 region.

Belongs to the TRAFAC class translation factor GTPase superfamily. Classic translation factor GTPase family. IF-2 subfamily.

It is found in the cytoplasm. One of the essential components for the initiation of protein synthesis. Protects formylmethionyl-tRNA from spontaneous hydrolysis and promotes its binding to the 30S ribosomal subunits. Also involved in the hydrolysis of GTP during the formation of the 70S ribosomal complex. This Corynebacterium efficiens (strain DSM 44549 / YS-314 / AJ 12310 / JCM 11189 / NBRC 100395) protein is Translation initiation factor IF-2.